Reading from the N-terminus, the 572-residue chain is RKTLLTFGLNLSSSVVLTPGDSVGEHLPKSGITFIIGLVVDDIVVIEEHLRIHTKARVLVQFSDIALLYNEFVQAFNNSDGAKHLLFATSLPHWADVDTTSETVRRFHEAVPEVEKWTPLSLLGFATGRLMQRNLQRMDLATSDLLSGLFFNETFITVDDMQYGAYKDAEGVATAEESLSNFGATDISVWSMARALRSDEPVLQDPMSPSMVYTVPNGNALTPAQLDWCGWCRFACADTGSRLTVFLCCIMRNKRDNDNAPKELADPVTLIFTDIESSTAQWATQPELMPDAVATHHSMVRSLIENYDCYEVKTVGDSFMIACKSPFAAVQLAQELQLRFLRLDWGTTVFDEFYREFEERHAEEGDGKYKPPTARLDPEVYRQLWNGLRVRVGIHTGLCDIRYDEVTKGYDYYGQTANTAARTESVGNGGQVLMTCETYHSLSTAERSQFDVTPLGGVPLRGVSEPVEVYQLNAVPGRSFAELRLDRVLDVLDIFGEGTAASTSDYSSTLAELSETAQAIAVSLQSLMGVFTQAQRQGTLMPFCERWRVRCPRKVHPRGTTATVRRLSVALQ.

At 1–225 (RKTLLTFGLN…PNGNALTPAQ (225 aa)) the chain is on the extracellular side. N-linked (GlcNAc...) asparagine glycosylation is found at Asn10, Asn77, and Asn152. The chain crosses the membrane as a helical span at residues 226 to 251 (LDWCGWCRFACADTGSRLTVFLCCIM). Residues 252-572 (RNKRDNDNAP…TVRRLSVALQ (321 aa)) lie on the Cytoplasmic side of the membrane. Positions 269-424 (TLIFTDIESS…QTANTAARTE (156 aa)) constitute a Guanylate cyclase domain. 2 residues coordinate Mg(2+): Asp274 and Asp317.

The protein belongs to the adenylyl cyclase class-3 family. Mg(2+) is required as a cofactor.

The protein localises to the cell membrane. The catalysed reaction is ATP = 3',5'-cyclic AMP + diphosphate. Could act as a receptor for an unknown ligand. The sequence is that of Receptor-type adenylate cyclase GRESAG 4.2 (GRESAG 4.2) from Trypanosoma brucei brucei.